Consider the following 106-residue polypeptide: Urease subunit beta (106 aa).

Belongs to the urease beta subunit family. Heterotrimer of UreA (gamma), UreB (beta) and UreC (alpha) subunits. Three heterotrimers associate to form the active enzyme. The apoenzyme interacts with an accessory complex composed of UreD, UreF and UreG, which is required for the assembly of the nickel containing metallocenter of UreC. The UreE protein may also play a direct role as a metallochaperone in nickel transfer to the urease apoprotein.

The protein localises to the cytoplasm. It catalyses the reaction urea + 2 H2O + H(+) = hydrogencarbonate + 2 NH4(+). It participates in nitrogen metabolism; urea degradation; CO(2) and NH(3) from urea (urease route): step 1/1. With respect to regulation, the apoenzyme can be activated in vitro in the presence of nickel ions and carbon dioxide, which promotes carboxylation of 'Lys-217' of the UreC (alpha) subunit. The polypeptide is Urease subunit beta (Klebsiella aerogenes (Enterobacter aerogenes)).